The sequence spans 397 residues: Elongation factor Tu (397 aa).

Residues 10–206 (KPHVNIGTIG…AIDSYIPTPE (197 aa)) enclose the tr-type G domain. Residues 19–26 (GHVDHGKT) form a G1 region. 19-26 (GHVDHGKT) lines the GTP pocket. Thr-26 is a binding site for Mg(2+). The interval 60-64 (GITIN) is G2. Residues 81–84 (DCPG) form a G3 region. GTP is bound by residues 81 to 85 (DCPGH) and 136 to 139 (NKAD). Residues 136–139 (NKAD) form a G4 region. Positions 174-176 (SAL) are G5.

This sequence belongs to the TRAFAC class translation factor GTPase superfamily. Classic translation factor GTPase family. EF-Tu/EF-1A subfamily. As to quaternary structure, monomer.

It is found in the cytoplasm. It catalyses the reaction GTP + H2O = GDP + phosphate + H(+). Functionally, GTP hydrolase that promotes the GTP-dependent binding of aminoacyl-tRNA to the A-site of ribosomes during protein biosynthesis. The polypeptide is Elongation factor Tu (Clostridium botulinum (strain ATCC 19397 / Type A)).